The following is a 270-amino-acid chain: Aliphatic sulfonates import ATP-binding protein SsuB (270 aa).

The ABC transporter domain occupies 17–238 (LASKGLRKTF…ARGSHRLAAL (222 aa)). An ATP-binding site is contributed by 49–56 (GRSGCGKS). The interval 248-270 (STPGTAPEPDPVAPLPTQLRWAH) is disordered.

Belongs to the ABC transporter superfamily. Aliphatic sulfonates importer (TC 3.A.1.17.2) family. The complex is composed of two ATP-binding proteins (SsuB), two transmembrane proteins (SsuC) and a solute-binding protein (SsuA).

The protein resides in the cell inner membrane. The enzyme catalyses ATP + H2O + aliphatic sulfonate-[sulfonate-binding protein]Side 1 = ADP + phosphate + aliphatic sulfonateSide 2 + [sulfonate-binding protein]Side 1.. Part of the ABC transporter complex SsuABC involved in aliphatic sulfonates import. Responsible for energy coupling to the transport system. In Pseudomonas putida (strain ATCC 47054 / DSM 6125 / CFBP 8728 / NCIMB 11950 / KT2440), this protein is Aliphatic sulfonates import ATP-binding protein SsuB.